The chain runs to 185 residues: Ribosome-recycling factor (185 aa).

This sequence belongs to the RRF family.

It localises to the cytoplasm. Its function is as follows. Responsible for the release of ribosomes from messenger RNA at the termination of protein biosynthesis. May increase the efficiency of translation by recycling ribosomes from one round of translation to another. The chain is Ribosome-recycling factor from Shewanella denitrificans (strain OS217 / ATCC BAA-1090 / DSM 15013).